Here is a 149-residue protein sequence, read N- to C-terminus: Aquaporin-like protein 2 (149 aa).

Residues M1–S35 form a disordered region. The Cytoplasmic portion of the chain corresponds to M1–H47. Residues F48 to I68 form a helical membrane-spanning segment. Residues C69–Q89 lie on the Extracellular side of the membrane. The chain crosses the membrane as a helical span at residues L90–W110. Over G111 to R149 the chain is Cytoplasmic.

The protein belongs to the MIP/aquaporin (TC 1.A.8) family.

Its subcellular location is the endoplasmic reticulum membrane. It localises to the cell membrane. In terms of biological role, water channel required to facilitate the transport of water across membranes. Involved in freeze tolerance, osmotolerance and cell flocculation in liquid cultures. Is non-functional in most laboratory strains. The chain is Aquaporin-like protein 2 (AQY2-2) from Saccharomyces cerevisiae (strain RM11-1a) (Baker's yeast).